Here is a 487-residue protein sequence, read N- to C-terminus: Inosine-5'-monophosphate dehydrogenase (487 aa).

CBS domains lie at 93–152 and 153–214; these read VVTE…VTAV and MTPK…CKDE. NAD(+) contacts are provided by residues Asp-248, 248–250, and 298–300; these read DSS and GIG. K(+) is bound by residues Gly-300 and Gly-302. Residue Ser-303 participates in IMP binding. Cys-305 contacts K(+). Cys-305 acts as the Thioimidate intermediate in catalysis. IMP-binding positions include 338–340, 361–362, and 385–389; these read DGG, GS, and YRGMG. Arg-401 (proton acceptor) is an active-site residue. Residue Glu-415 participates in IMP binding. 3 residues coordinate K(+): Glu-469, Ser-470, and His-471.

It belongs to the IMPDH/GMPR family. Homotetramer. Requires K(+) as cofactor.

The catalysed reaction is IMP + NAD(+) + H2O = XMP + NADH + H(+). The protein operates within purine metabolism; XMP biosynthesis via de novo pathway; XMP from IMP: step 1/1. Its activity is regulated as follows. Mycophenolic acid (MPA) is a non-competitive inhibitor that prevents formation of the closed enzyme conformation by binding to the same site as the amobile flap. In contrast, mizoribine monophosphate (MZP) is a competitive inhibitor that induces the closed conformation. MPA is a potent inhibitor of mammalian IMPDHs but a poor inhibitor of the bacterial enzymes. MZP is a more potent inhibitor of bacterial IMPDH. In terms of biological role, catalyzes the conversion of inosine 5'-phosphate (IMP) to xanthosine 5'-phosphate (XMP), the first committed and rate-limiting step in the de novo synthesis of guanine nucleotides, and therefore plays an important role in the regulation of cell growth. The sequence is that of Inosine-5'-monophosphate dehydrogenase from Yersinia pestis.